A 112-amino-acid chain; its full sequence is MPVDWFGYVYAATVAAGGIMGYAKAGSIPSLGAGLAFGALLGYGAHLNSQDTPRPLLQLGTSLFLAGLMGARWNRSGKLMPAGMVCMLSVAALVKNLATYNRYLMPAGTKAP.

Residues 3-23 (VDWFGYVYAATVAAGGIMGYA) form a helical membrane-spanning segment.

The protein belongs to the TMEM14 family.

Its subcellular location is the membrane. The sequence is that of Transmembrane protein 14 homolog from Drosophila melanogaster (Fruit fly).